Consider the following 1095-residue polypeptide: MSRSAIQVAKAATYLPDLVEVQRSSFKWFLDKGLIEELDNFSPITDYTGKLELHFIGAEYKLKRPRHDVEEAKRRDATFASQMYVTCRLVNKETGEIKEQEVFIGELPLMTERGTFIINGAERVIVNQIVRSPGVYFKDEQDKNGRRTYNASVIPNRGAWLKFETDKNDLLHVRVDKTRKINAHVLMRAMGLSDNDVIDKLRHPEFYKKSIDAANEEGISSEDQALLELYKKLRPGEPPSVSGGQQLLQTRFFDPKRYDLGRVGRYKINKKLRLTIPDNLRTLTNEDVLSTLDYLINLELDVGGATLDDIDHLGNRRVRSVGELLQNQVRVGLNRLERIIKERMTVGETDSLTPAQLVNPKPLVAAIKEFFGSSQLSQFMDQTNPLAELTHKRRISALGPGGLTRERAGFAVRDIHPSHYGRLCPIETPEGPNAGLINSLATHARVNEYGFIETPFWKVENGRLIKEGDPIYLSADLEDECRVAPGDVATNEEGKIMAELVPVRYRQDFETVSPEQVDYVQLSPVQVISVAASLIPFLEHDDANRALMGSNMQRQAVPLLRPERPLVGTGLETQVARDSGMVPISKVNGTVSYVDANAIVVTDDEGNDHTHYLQKYQRSNQDTCLNHRPIVFNGDPVIVGQVLADGSACEGGEIALGQNVLIAYMPWEGYNYEDAILVSERLVKDDLYTSVHIEKYEIEARQTKLGPEEITREIPNVSEENLGNLDEMGIIRIGAYVESGDILVGKVTPKGESDQPPEEKLLRAIFGEKARDVRDNSLRVPSTERGRVVDVRIYTREQGDELPPGANMVVRVYVAQRRKIQVGDKMAGRHGNKGIISRILPREDMPYLPDGTPVDICLNPLGVPSRMNVGQVFELLMGWAASNLDCRVKIVPFDEMYGPEMSNQTVQAYLKEAAKQPGKSWVYNPKDPGKLLLKDGRTGEPFDQPVAVGYAHFLKLVHLVDDKIHARSTGPYSLVTQQPLGGKAQQGGQRLGEMEVWALEAYGAAYTLQELLTVKSDDMQGRNEALNSIVKGKPIPRPGTPESFKVLMRELQSLGLDIGVYTDDGKEVDLMQDVNPRRSTPSRPTYESLGKEYEE.

Positions 1069–1095 are disordered; the sequence is DLMQDVNPRRSTPSRPTYESLGKEYEE.

This sequence belongs to the RNA polymerase beta chain family. In terms of assembly, in cyanobacteria the RNAP catalytic core is composed of 2 alpha, 1 beta, 1 beta', 1 gamma and 1 omega subunit. When a sigma factor is associated with the core the holoenzyme is formed, which can initiate transcription.

The catalysed reaction is RNA(n) + a ribonucleoside 5'-triphosphate = RNA(n+1) + diphosphate. In terms of biological role, DNA-dependent RNA polymerase catalyzes the transcription of DNA into RNA using the four ribonucleoside triphosphates as substrates. The chain is DNA-directed RNA polymerase subunit beta from Prochlorococcus marinus (strain NATL1A).